Reading from the N-terminus, the 687-residue chain is Protein-glutamine gamma-glutamyltransferase 2 (687 aa).

The residue at position 2 (Ala-2) is an N-acetylalanine. A Phosphoserine modification is found at Ser-60. 2 cysteine pairs are disulfide-bonded: Cys-230–Cys-370 and Cys-370–Cys-371. Residues Cys-277, His-335, and Asp-358 contribute to the active site. Residues Asn-398, Asp-400, Glu-437, Glu-447, and Glu-452 each coordinate Ca(2+). N6-acetyllysine is present on Lys-468. Position 476-483 (476-483 (RIRVGQSM)) interacts with GTP. Glu-539 lines the Ca(2+) pocket. Residue 580–583 (RDLY) coordinates GTP. Gln-633 participates in a covalent cross-link: Isoglutamyl lysine isopeptide (Gln-Lys) (interchain with K-?).

The protein belongs to the transglutaminase superfamily. Transglutaminase family. Monomer. Interacts with phospholipase C; promoting alpha-1 adrenergic receptor signaling. Interacts with PLCD1. As to quaternary structure, homooligomer. The cofactor is Ca(2+). Disulfide bond formation inactivates the calcium-dependent acyltransferase activity. Cys-370 can form disulfide bonds with both Cys-230 and Cys-371: formation of a disulfide bond between Cys-230 and Cys-370 facilitates formation of the disulfide between Cys-370 and Cys-371, which promotes inactivation of the acyltransferase activity. May also form interchain disulfids between Cys-230 and Cys-370. Ca(2+) protects against disulfide bond formation and inactivation. Post-translationally, auto-transglutaminated: Forms covalent cross-links mediated by transglutaminase between Gln-633 and the epsilon-amino group of a lysine residue of itself or HMGB1, forming homopolymers and heteropolymers, respectively. In terms of processing, S-nitrosylated, leading to inactivation of the acyltransferase activity.

Its subcellular location is the cytoplasm. It is found in the cytosol. The protein localises to the nucleus. The protein resides in the chromosome. It localises to the secreted. Its subcellular location is the extracellular space. It is found in the extracellular matrix. The protein localises to the cell membrane. The protein resides in the mitochondrion. It localises to the perinuclear region. It carries out the reaction L-glutaminyl-[protein] + L-lysyl-[protein] = [protein]-L-lysyl-N(6)-5-L-glutamyl-[protein] + NH4(+). It catalyses the reaction L-glutaminyl-[protein] + serotonin = 5-serotonyl-L-glutamyl-[protein] + NH4(+). The catalysed reaction is L-glutaminyl-[protein] + dopamine = 5-dopaminyl-L-glutamyl-[protein] + NH4(+). The enzyme catalyses L-glutaminyl-[protein] + histamine = 5-histaminyl-L-glutamyl-[protein] + NH4(+). It carries out the reaction L-glutaminyl-[protein] + (R)-noradrenaline = 5-(R)-noradrenalinyl-L-glutamyl-[protein] + NH4(+). It catalyses the reaction L-glutaminyl-[protein] + H2O = L-glutamyl-[protein] + NH4(+). Acyltransferase activity is regulated by the binding of GTP and Ca(2+): inactivated by GTP, which stabilizes its closed structure, thereby obstructing the accessibility of substrates to the active sites. In contrast, Ca(2+) acts as a cofactor by inducing conformational change to the active open form. In absence of Ca(2+), Mg(2+) may bind Ca(2+)-binding sites, promoting GTP-binding and subsequent inhibition of the acyltransferase activity. Extracellularly reduced and activated by CLIC3. Specifically inhibited by compound VA4 ((S)-Benzyl (6-Acrylamido-1-(4-((5-(dimethylamino)naphthalen-1-yl)sulfonyl)piperazin-1-yl)-1-oxohexan-2-yl)carbamate), which specifically abolishes both the transamidation and GTP-binding activities. Calcium-dependent acyltransferase that catalyzes the formation of covalent bonds between peptide-bound glutamine and various primary amines, such as gamma-amino group of peptide-bound lysine, or mono- and polyamines, thereby producing cross-linked or aminated proteins, respectively. Involved in many biological processes, such as bone development, angiogenesis, wound healing, cellular differentiation, chromatin modification and apoptosis. Acts as a protein-glutamine gamma-glutamyltransferase by mediating the cross-linking of proteins, such as ACO2, HSPB6, FN1, HMGB1, RAP1GDS1, SLC25A4/ANT1, SPP1 and WDR54. Under physiological conditions, the protein cross-linking activity is inhibited by GTP; inhibition is relieved by Ca(2+) in response to various stresses. When secreted, catalyzes cross-linking of proteins of the extracellular matrix, such as FN1 and SPP1 resulting in the formation of scaffolds. Plays a key role during apoptosis, both by (1) promoting the cross-linking of cytoskeletal proteins resulting in condensation of the cytoplasm, and by (2) mediating cross-linking proteins of the extracellular matrix, resulting in the irreversible formation of scaffolds that stabilize the integrity of the dying cells before their clearance by phagocytosis, thereby preventing the leakage of harmful intracellular components. In addition to protein cross-linking, can use different monoamine substrates to catalyze a vast array of protein post-translational modifications: mediates aminylation of serotonin, dopamine, noradrenaline or histamine into glutamine residues of target proteins to generate protein serotonylation, dopaminylation, noradrenalinylation or histaminylation, respectively. Mediates protein serotonylation of small GTPases during activation and aggregation of platelets, leading to constitutive activation of these GTPases. Plays a key role in chromatin organization by mediating serotonylation and dopaminylation of histone H3. Catalyzes serotonylation of 'Gln-5' of histone H3 (H3Q5ser) during serotonergic neuron differentiation, thereby facilitating transcription. Acts as a mediator of neurotransmission-independent role of nuclear dopamine in ventral tegmental area (VTA) neurons: catalyzes dopaminylation of 'Gln-5' of histone H3 (H3Q5dop), thereby regulating relapse-related transcriptional plasticity in the reward system. Regulates vein remodeling by mediating serotonylation and subsequent inactivation of ATP2A2/SERCA2. Also acts as a protein deamidase by mediating the side chain deamidation of specific glutamine residues of proteins to glutamate. Catalyzes specific deamidation of protein gliadin, a component of wheat gluten in the diet. May also act as an isopeptidase cleaving the previously formed cross-links. Also able to participate in signaling pathways independently of its acyltransferase activity: acts as a signal transducer in alpha-1 adrenergic receptor-mediated stimulation of phospholipase C-delta (PLCD) activity and is required for coupling alpha-1 adrenergic agonists to the stimulation of phosphoinositide lipid metabolism. Functionally, has cytotoxic activity: is able to induce apoptosis independently of its acyltransferase activity. The sequence is that of Protein-glutamine gamma-glutamyltransferase 2 from Homo sapiens (Human).